The chain runs to 248 residues: UPF0328 protein ECU06_0030/ECU06_1690/ECU11_0020 (248 aa).

Disordered stretches follow at residues 1–34 (MVRH…HPSR) and 51–81 (ASAE…ILPD). Polar residues-rich tracts occupy residues 10-19 (PKTTNPNPES) and 61-76 (QNLS…THQS).

This sequence belongs to the UPF0328 family.

The protein is UPF0328 protein ECU06_0030/ECU06_1690/ECU11_0020 of Encephalitozoon cuniculi (strain GB-M1) (Microsporidian parasite).